The following is a 204-amino-acid chain: Large ribosomal subunit protein eL15y (204 aa).

Residues 162 to 204 (RGLTSEGKKNRGLRGKGHNNHKNRPSRRATWKKNNSISLRRYR) form a disordered region. Residues 171–192 (NRGLRGKGHNNHKNRPSRRATW) show a composition bias toward basic residues. Residues 193–204 (KKNNSISLRRYR) are compositionally biased toward polar residues.

Belongs to the eukaryotic ribosomal protein eL15 family.

This chain is Large ribosomal subunit protein eL15y (RPL15B), found in Arabidopsis thaliana (Mouse-ear cress).